Here is a 206-residue protein sequence, read N- to C-terminus: Large ribosomal subunit protein uL4 (206 aa).

The protein belongs to the universal ribosomal protein uL4 family. Part of the 50S ribosomal subunit.

Functionally, one of the primary rRNA binding proteins, this protein initially binds near the 5'-end of the 23S rRNA. It is important during the early stages of 50S assembly. It makes multiple contacts with different domains of the 23S rRNA in the assembled 50S subunit and ribosome. Its function is as follows. Forms part of the polypeptide exit tunnel. The chain is Large ribosomal subunit protein uL4 from Methylorubrum extorquens (strain CM4 / NCIMB 13688) (Methylobacterium extorquens).